We begin with the raw amino-acid sequence, 202 residues long: Dephospho-CoA kinase (202 aa).

Residues 6-202 (KISVTGDPSS…QCFKALKGTI (197 aa)) enclose the DPCK domain. An ATP-binding site is contributed by 14–19 (SSGKTE).

This sequence belongs to the CoaE family.

The protein localises to the cytoplasm. It catalyses the reaction 3'-dephospho-CoA + ATP = ADP + CoA + H(+). The protein operates within cofactor biosynthesis; coenzyme A biosynthesis; CoA from (R)-pantothenate: step 5/5. Catalyzes the phosphorylation of the 3'-hydroxyl group of dephosphocoenzyme A to form coenzyme A. The sequence is that of Dephospho-CoA kinase from Chlamydia muridarum (strain MoPn / Nigg).